The chain runs to 555 residues: MKSDIEIAQEAKMLHIREVAKKLDIEEDYLEYYGKYKAKISPALSEKIKDRKDGKLILVTAITPTPAGEGKTTLTVGLGQALAKIGKKAMIALREPSLGPCMGIKGGAAGGGYSQVVPMEDINLHFTGDLHAITAAHNLLAAMIDNHIHHGNELNIDIRAITWKRAMDMNDRALREIIVGLGGKANGFPRQDGFIITVASEVMAILCLAQDLMDLKRRIGDIIVAYDKDGNPVTARDLKADGAMTVLLKDAIKPNLVQTIENVPAFVHGGPFANIAHGCNSLIATKYGLKLADYLVTEAGFGADLGAEKFFDIKSRFGGLTPNAAVIVATVKALKMHGGVKKEHLQKEDVEAVRRGIENLEKQVENVRKFGVPVVVALNRFVFDTEREIEEVRKACEEMGVDMAVAEVWEKGGEGGIELAEKVVKACETPSNFHVLYDETLPIKDKLHIIATEIYGADGVEYTASALKDIANLERLGFDKMPIVVAKTQYSLSDDPKLLGRPRGFKITVRELRVSRGAGFIVALTGDIMTMPGLPKHPAAENIDIDENGRITGLF.

ATP is bound at residue 65–72; that stretch reads TPAGEGKT.

This sequence belongs to the formate--tetrahydrofolate ligase family.

It carries out the reaction (6S)-5,6,7,8-tetrahydrofolate + formate + ATP = (6R)-10-formyltetrahydrofolate + ADP + phosphate. It participates in one-carbon metabolism; tetrahydrofolate interconversion. This chain is Formate--tetrahydrofolate ligase, found in Thermoanaerobacter pseudethanolicus (strain ATCC 33223 / 39E) (Clostridium thermohydrosulfuricum).